A 224-amino-acid polypeptide reads, in one-letter code: Transmembrane protein C16orf54 (224 aa).

O-linked (GalNAc...) threonine glycosylation is present at T4. The helical transmembrane segment at 32-52 threads the bilayer; it reads IPIMLVLATLAALFILTTAVL. Disordered regions lie at residues 104-138 and 152-203; these read TDRA…SNLG and WGPQ…GLQP. Phosphothreonine is present on residues T112 and T116. S194 bears the Phosphoserine mark.

O-glycosylated with core 1 or possibly core 8 glycans.

The protein localises to the membrane. This chain is Transmembrane protein C16orf54 (C16orf54), found in Homo sapiens (Human).